Consider the following 102-residue polypeptide: MKKFIALLFFILLLSGCGVNSQKSQGEDVSPDSNIETKEGTYVGLADTHTIEVTVDNEPVSLDITEESTSDLDKFNSGDKVTITYEKNDEGQLLLKDIERAN.

The signal sequence occupies residues 1–16 (MKKFIALLFFILLLSG). A lipid anchor (N-palmitoyl cysteine) is attached at Cys17. The S-diacylglycerol cysteine moiety is linked to residue Cys17.

The protein localises to the cell membrane. Functionally, possible role in the secretion of LytB and LytC. This is Membrane-bound protein LytA (lytA) from Bacillus subtilis (strain 168).